A 439-amino-acid chain; its full sequence is Lactamase-like protein nscB (439 aa).

Positions 214, 216, 218, and 219 each coordinate Zn(2+). D218 functions as the Proton donor/acceptor in the catalytic mechanism.

This sequence belongs to the metallo-beta-lactamase superfamily. It depends on Zn(2+) as a cofactor.

The protein operates within secondary metabolite biosynthesis. Functionally, lactamase-like protein; part of the gene cluster that mediates the biosynthesis of neosartoricin B, a prenylated anthracenone that probably exhibits T-cell antiproliferative activity, suggestive of a physiological role as an immunosuppressive agent. The non-reducing polyketide synthase nscA probably synthesizes and cyclizes the decaketide backbone. The hydrolase nscB then mediates the product release through hydrolysis followed by spontaneous decarboxylation. The prenyltransferase nscD catalyzes the addition of the dimethylallyl group to the aromatic C5. The FAD-dependent monooxygenase nscC is then responsible for the stereospecific hydroxylation at C2. Neosartoricin B can be converted into two additional compounds neosartoricins C and D. Neosartoricin C is a spirocyclic compound that is cyclized through the attack of C3 hydroxyl on C14, followed by dehydration. On the other hand, neosartoricin D is a further cyclized compound in which attack of C2 on C14 in neosartoricin C results in the formation of the acetal-containing dioxabicyclo-octanone ring. Both of these compounds are novel and possibly represent related metabolites of the gene cluster. This is Lactamase-like protein nscB from Arthroderma benhamiae (strain ATCC MYA-4681 / CBS 112371) (Trichophyton mentagrophytes).